We begin with the raw amino-acid sequence, 62 residues long: Antitoxin VbhA (62 aa).

The short motif at Ser-20–Gly-25 is the Inhibitory (S/T)XXXE(G/N) motif element. Glu-24 is an ATP binding site.

As to quaternary structure, interacts with VbhT.

In terms of biological role, antitoxin component of type II toxin-antitoxin (TA) system VbhT-VbhA. Acts by inhibiting the adenylyltransferase activity of VbhT; competes with ATP-binding and prevents productive ATP-binding to VbhT. In Bartonella schoenbuchensis (strain DSM 13525 / NCTC 13165 / R1), this protein is Antitoxin VbhA.